We begin with the raw amino-acid sequence, 269 residues long: Formamidopyrimidine-DNA glycosylase (269 aa).

Proline 2 serves as the catalytic Schiff-base intermediate with DNA. Catalysis depends on glutamate 3, which acts as the Proton donor. The Proton donor; for beta-elimination activity role is filled by lysine 57. 3 residues coordinate DNA: histidine 90, arginine 109, and lysine 150. The FPG-type zinc-finger motif lies at 235-269 (QVYGRAGELCRRCGNVIEIAKHGQRSTFFCRHCQH). Arginine 259 acts as the Proton donor; for delta-elimination activity in catalysis.

The protein belongs to the FPG family. As to quaternary structure, monomer. Requires Zn(2+) as cofactor.

It carries out the reaction Hydrolysis of DNA containing ring-opened 7-methylguanine residues, releasing 2,6-diamino-4-hydroxy-5-(N-methyl)formamidopyrimidine.. The catalysed reaction is 2'-deoxyribonucleotide-(2'-deoxyribose 5'-phosphate)-2'-deoxyribonucleotide-DNA = a 3'-end 2'-deoxyribonucleotide-(2,3-dehydro-2,3-deoxyribose 5'-phosphate)-DNA + a 5'-end 5'-phospho-2'-deoxyribonucleoside-DNA + H(+). Involved in base excision repair of DNA damaged by oxidation or by mutagenic agents. Acts as a DNA glycosylase that recognizes and removes damaged bases. Has a preference for oxidized purines, such as 7,8-dihydro-8-oxoguanine (8-oxoG). Has AP (apurinic/apyrimidinic) lyase activity and introduces nicks in the DNA strand. Cleaves the DNA backbone by beta-delta elimination to generate a single-strand break at the site of the removed base with both 3'- and 5'-phosphates. The polypeptide is Formamidopyrimidine-DNA glycosylase (Yersinia enterocolitica serotype O:8 / biotype 1B (strain NCTC 13174 / 8081)).